The primary structure comprises 419 residues: Tyrosine--tRNA ligase (419 aa).

Tyr34 provides a ligand contact to L-tyrosine. The 'HIGH' region signature appears at Pro39–Asn48. 2 residues coordinate L-tyrosine: Tyr169 and Gln173. The short motif at Lys229–Ser233 is the 'KMSKS' region element. Position 232 (Lys232) interacts with ATP. One can recognise an S4 RNA-binding domain in the interval Leu353–Tyr419.

The protein belongs to the class-I aminoacyl-tRNA synthetase family. TyrS type 1 subfamily. As to quaternary structure, homodimer.

It is found in the cytoplasm. It carries out the reaction tRNA(Tyr) + L-tyrosine + ATP = L-tyrosyl-tRNA(Tyr) + AMP + diphosphate + H(+). Catalyzes the attachment of tyrosine to tRNA(Tyr) in a two-step reaction: tyrosine is first activated by ATP to form Tyr-AMP and then transferred to the acceptor end of tRNA(Tyr). The polypeptide is Tyrosine--tRNA ligase (Lactococcus lactis subsp. lactis (strain IL1403) (Streptococcus lactis)).